We begin with the raw amino-acid sequence, 142 residues long: Small ribosomal subunit protein uS19 (142 aa).

The protein belongs to the universal ribosomal protein uS19 family. As to quaternary structure, component of the small ribosomal subunit. Mature ribosomes consist of a small (40S) and a large (60S) subunit. The 40S subunit contains about 32 different proteins and 1 molecule of RNA (18S). The 60S subunit contains 45 different proteins and 3 molecules of RNA (25S, 5.8S and 5S).

The protein localises to the cytoplasm. Component of the ribosome, a large ribonucleoprotein complex responsible for the synthesis of proteins in the cell. The small ribosomal subunit (SSU) binds messenger RNAs (mRNAs) and translates the encoded message by selecting cognate aminoacyl-transfer RNA (tRNA) molecules. The large subunit (LSU) contains the ribosomal catalytic site termed the peptidyl transferase center (PTC), which catalyzes the formation of peptide bonds, thereby polymerizing the amino acids delivered by tRNAs into a polypeptide chain. The nascent polypeptides leave the ribosome through a tunnel in the LSU and interact with protein factors that function in enzymatic processing, targeting, and the membrane insertion of nascent chains at the exit of the ribosomal tunnel. RPS15 has a role in the late stage of the assembly of pre-40S particles within the nucleus and controls their export to the cytoplasm. The chain is Small ribosomal subunit protein uS19 (RPS15) from Candida albicans (strain SC5314 / ATCC MYA-2876) (Yeast).